Reading from the N-terminus, the 75-residue chain is Dermaseptin-A3 (75 aa).

Residues Met-1–Cys-22 form the signal peptide. The propeptide occupies Glu-23–Leu-43. Gln-72 is subject to Glutamine amide. Residues Glu-74–Gln-75 constitute a propeptide that is removed on maturation.

This sequence belongs to the frog skin active peptide (FSAP) family. Dermaseptin subfamily. As to expression, expressed by the skin glands.

It is found in the secreted. Functionally, possesses a potent antimicrobial activity against Gram-positive and Gram-negative bacteria. Probably acts by disturbing membrane functions with its amphipathic structure. In Agalychnis annae (Blue-sided leaf frog), this protein is Dermaseptin-A3.